Consider the following 288-residue polypeptide: Fibroblast growth factor 2 (288 aa).

Residues 1 to 142 constitute a propeptide that is removed on maturation; sequence MVGVGGGDVE…TMAAGSITTL (142 aa). Residues 1–156 form a disordered region; the sequence is MVGVGGGDVE…EDGGSGAFPP (156 aa). Residues 72–84 show a composition bias toward basic and acidic residues; that stretch reads ERPSGSRLGDHGR. Residues Arg-108, Arg-110, and Arg-112 each carry the omega-N-methylarginine; alternate modification. Residues Arg-108, Arg-110, and Arg-112 each carry the symmetric dimethylarginine; alternate modification. Positions 113 to 132 are enriched in low complexity; sequence GTAAPRAAPAARGSRPGPAG. Asn-169 provides a ligand contact to heparin. The Cell attachment site; atypical signature appears at 179 to 181; that stretch reads DGR. Tyr-215 carries the post-translational modification Phosphotyrosine; by TEC. A Cell attachment site; atypical motif is present at residues 221-223; the sequence is DGR. Lys-228 is covalently cross-linked (Glycyl lysine isopeptide (Lys-Gly) (interchain with G-Cter in SUMO1)). Residues 261–277 are heparin-binding; that stretch reads KRTGQYKLGSKTGPGQK.

Belongs to the heparin-binding growth factors family. In terms of assembly, monomer. Homodimer. Interacts with FGFR1, FGFR2, FGFR3 and FGFR4. Affinity between fibroblast growth factors (FGFs) and their receptors is increased by heparan sulfate glycosaminoglycans that function as coreceptors. Interacts with CSPG4, FGFBP1 and TEC. Found in a complex with FGFBP1, FGF1 and FGF2. Interacts with FGFBP3. Interacts with integrin ITGAV:ITGB3; the interaction is required for FGF2 signaling. Interacts with SNORC (via the extracellular domain). Interacts with glypican GPC3. Post-translationally, phosphorylation at Tyr-215 regulates FGF2 unconventional secretion.

The protein localises to the secreted. It localises to the nucleus. Its function is as follows. Acts as a ligand for FGFR1, FGFR2, FGFR3 and FGFR4. Also acts as an integrin ligand which is required for FGF2 signaling. Binds to integrin ITGAV:ITGB3. Plays an important role in the regulation of cell survival, cell division, cell differentiation and cell migration. Functions as a potent mitogen in vitro. Can induce angiogenesis. Mediates phosphorylation of ERK1/2 and thereby promotes retinal lens fiber differentiation. The polypeptide is Fibroblast growth factor 2 (Pan troglodytes (Chimpanzee)).